The chain runs to 338 residues: Putative peptide import ATP-binding protein BruAb2_0796 (338 aa).

The region spanning 7–263 (LDIEGLRTVF…PRHPYTMGLL (257 aa)) is the ABC transporter domain. 43 to 50 (GESGSGKS) contributes to the ATP binding site.

The protein belongs to the ABC transporter superfamily. In terms of assembly, the complex is composed of two ATP-binding proteins (BruAb2_0796 and BruAb2_0797), two transmembrane proteins (BruAb2_0794) and a solute-binding protein (BruAb2_0792).

Its subcellular location is the cell inner membrane. Its function is as follows. Probably part of an ABC transporter complex that could be involved in peptide import. Probably responsible for energy coupling to the transport system. This is Putative peptide import ATP-binding protein BruAb2_0796 from Brucella abortus biovar 1 (strain 9-941).